The chain runs to 442 residues: tRNA pseudouridine(38/39) synthase (442 aa).

Asp151 serves as the catalytic Nucleophile. Substrate is bound at residue Tyr222.

Belongs to the tRNA pseudouridine synthase TruA family.

Its subcellular location is the nucleus. The enzyme catalyses uridine(38/39) in tRNA = pseudouridine(38/39) in tRNA. Functionally, formation of pseudouridines at positions 38 and 39 in the anticodon stem and loop of transfer RNAs. This chain is tRNA pseudouridine(38/39) synthase (DEG1), found in Saccharomyces cerevisiae (strain ATCC 204508 / S288c) (Baker's yeast).